A 201-amino-acid polypeptide reads, in one-letter code: GTP cyclohydrolase 1 (201 aa).

Residues 1 to 20 (MDATVKKMSPETSRPSREEA) form a disordered region. Zn(2+)-binding residues include Cys91, His94, and Cys162.

The protein belongs to the GTP cyclohydrolase I family. Homomer.

It catalyses the reaction GTP + H2O = 7,8-dihydroneopterin 3'-triphosphate + formate + H(+). It participates in cofactor biosynthesis; 7,8-dihydroneopterin triphosphate biosynthesis; 7,8-dihydroneopterin triphosphate from GTP: step 1/1. This is GTP cyclohydrolase 1 from Allorhizobium ampelinum (strain ATCC BAA-846 / DSM 112012 / S4) (Agrobacterium vitis (strain S4)).